The chain runs to 167 residues: Ubiquitin-conjugating enzyme E2 2 (167 aa).

Residues 4–150 (PARRRLMRDF…VKETVEKSWE (147 aa)) enclose the UBC core domain. Residue cysteine 88 is the Glycyl thioester intermediate of the active site. The interval 148-167 (SWEDNMDDMDDSDEDDEDDE) is disordered. The span at 151-167 (DNMDDMDDSDEDDEDDE) shows a compositional bias: acidic residues.

Belongs to the ubiquitin-conjugating enzyme family.

It localises to the cytoplasm. Its subcellular location is the nucleus. The catalysed reaction is S-ubiquitinyl-[E1 ubiquitin-activating enzyme]-L-cysteine + [E2 ubiquitin-conjugating enzyme]-L-cysteine = [E1 ubiquitin-activating enzyme]-L-cysteine + S-ubiquitinyl-[E2 ubiquitin-conjugating enzyme]-L-cysteine.. It functions in the pathway protein modification; protein ubiquitination. Functionally, catalyzes the covalent attachment of ubiquitin to other proteins. Plays a role in transcription regulation by catalyzing the monoubiquitination of histone H2B to form H2BK123ub1. H2BK123ub1 gives a specific tag for epigenetic transcriptional activation and is also a prerequisite for H3K4me and H3K79me formation. Also involved in postreplication repair of UV-damaged DNA, in N-end rule-dependent protein degradation and in sporulation. This chain is Ubiquitin-conjugating enzyme E2 2 (UBC2), found in Candida glabrata (strain ATCC 2001 / BCRC 20586 / JCM 3761 / NBRC 0622 / NRRL Y-65 / CBS 138) (Yeast).